Consider the following 268-residue polypeptide: Myeloid leukemia factor 1 (268 aa).

3 positions are modified to phosphoserine: Ser6, Ser8, and Ser32. The tract at residues 50–125 (RVHNRRGHND…IGDEPPKVFQ (76 aa)) is interaction with COPS3. The segment at 208 to 268 (PGRHNLENTR…KGSSVKSNKK (61 aa)) is disordered. 2 stretches are compositionally biased toward basic and acidic residues: residues 226–237 (PGSRELKRREKP) and 244–257 (EHGR…DKLH).

The protein belongs to the MLF family. Interacts with CENPU. Also interacts with NRBP1/MADM, YWHAZ/14-3-3-zeta and HNRPUL2/MANP. NRBP1 recruits a serine kinase which phosphorylates both itself and MLF1. Phosphorylated MLF1 then binds to YWHAZ and is retained in the cytoplasm. Retained in the nucleus by binding to HNRPUL2. Binds to COPS3/CSN3 which is required for suppression of COP1 and activation of p53. Phosphorylation is required for binding to YWHAZ.

It localises to the cytoplasm. It is found in the nucleus. The protein localises to the cell projection. The protein resides in the cilium. Its subcellular location is the cytoskeleton. It localises to the cilium basal body. Its function is as follows. Involved in lineage commitment of primary hemopoietic progenitors by restricting erythroid formation and enhancing myeloid formation. Interferes with erythropoietin-induced erythroid terminal differentiation by preventing cells from exiting the cell cycle through suppression of CDKN1B/p27Kip1 levels. Suppresses COP1 activity via CSN3 which activates p53 and induces cell cycle arrest. Binds DNA and affects the expression of a number of genes so may function as a transcription factor in the nucleus. In Pongo abelii (Sumatran orangutan), this protein is Myeloid leukemia factor 1 (MLF1).